The chain runs to 423 residues: NADP-specific glutamate dehydrogenase (423 aa).

Lys-112 is a catalytic residue.

Belongs to the Glu/Leu/Phe/Val dehydrogenases family. In terms of assembly, homohexamer.

The catalysed reaction is L-glutamate + NADP(+) + H2O = 2-oxoglutarate + NH4(+) + NADPH + H(+). This is NADP-specific glutamate dehydrogenase (gdhA) from Saccharolobus shibatae (strain ATCC 51178 / DSM 5389 / JCM 8931 / NBRC 15437 / B12) (Sulfolobus shibatae).